The primary structure comprises 352 residues: Chorismate synthase (352 aa).

Arg48 contributes to the NADP(+) binding site. FMN contacts are provided by residues 125-127 (RSS), 238-239 (NA), Gly278, 293-297 (KPTSS), and Arg319.

The protein belongs to the chorismate synthase family. As to quaternary structure, homotetramer. It depends on FMNH2 as a cofactor.

It catalyses the reaction 5-O-(1-carboxyvinyl)-3-phosphoshikimate = chorismate + phosphate. Its pathway is metabolic intermediate biosynthesis; chorismate biosynthesis; chorismate from D-erythrose 4-phosphate and phosphoenolpyruvate: step 7/7. Its function is as follows. Catalyzes the anti-1,4-elimination of the C-3 phosphate and the C-6 proR hydrogen from 5-enolpyruvylshikimate-3-phosphate (EPSP) to yield chorismate, which is the branch point compound that serves as the starting substrate for the three terminal pathways of aromatic amino acid biosynthesis. This reaction introduces a second double bond into the aromatic ring system. The polypeptide is Chorismate synthase (Legionella pneumophila subsp. pneumophila (strain Philadelphia 1 / ATCC 33152 / DSM 7513)).